The chain runs to 700 residues: Mitosis inducer protein blt1 (700 aa).

Polar residues-rich tracts occupy residues 1-11 (MSKSAFTSKSQ) and 43-53 (PRSTALPNLSN). 2 disordered regions span residues 1–53 (MSKS…NLSN) and 266–293 (TNNR…SKDQ). Over residues 273 to 284 (GSDGSNSNFNGG) the composition is skewed to low complexity. Positions 496–575 (SVALDDHNRQ…LNMLQKLSMQ (80 aa)) form a coiled coil. 2 disordered regions span residues 634–659 (FSSF…RKPS) and 671–700 (SSGS…SSKM). Ser-636 carries the phosphoserine modification.

In terms of assembly, interacts with cdr2, mid1 and sad1.

The protein localises to the cytoplasm. Its subcellular location is the cytoskeleton. In terms of biological role, at the onset of mitosis, forms a medial ring structure before the arrangement of the medial actin ring. Essential for the central positioning of the division septum before the cell divides. This chain is Mitosis inducer protein blt1 (blt1), found in Schizosaccharomyces pombe (strain 972 / ATCC 24843) (Fission yeast).